The primary structure comprises 217 residues: Urease accessory protein UreE (217 aa).

Positions 148–217 are disordered; sequence AYGEAAAHGH…DHDHGSGHHH (70 aa). Residues 160 to 171 show a composition bias toward basic and acidic residues; it reads AGHDHAHDHDHG. The segment covering 193–202 has biased composition (low complexity); sequence AAAPAPHVHG. Residues 206 to 217 show a composition bias toward basic and acidic residues; the sequence is GHDHDHGSGHHH.

The protein belongs to the UreE family.

It localises to the cytoplasm. Functionally, involved in urease metallocenter assembly. Binds nickel. Probably functions as a nickel donor during metallocenter assembly. The polypeptide is Urease accessory protein UreE (Methylibium petroleiphilum (strain ATCC BAA-1232 / LMG 22953 / PM1)).